The primary structure comprises 131 residues: Large ribosomal subunit protein bL17 (131 aa).

It belongs to the bacterial ribosomal protein bL17 family. In terms of assembly, part of the 50S ribosomal subunit. Contacts protein L32.

In Thermotoga maritima (strain ATCC 43589 / DSM 3109 / JCM 10099 / NBRC 100826 / MSB8), this protein is Large ribosomal subunit protein bL17.